The sequence spans 99 residues: Malonate decarboxylase acyl carrier protein (99 aa).

Ser25 carries the post-translational modification O-(phosphoribosyl dephospho-coenzyme A)serine.

It belongs to the MdcC family. In terms of processing, covalently binds the prosthetic group of malonate decarboxylase.

Its subcellular location is the cytoplasm. Its function is as follows. Subunit of malonate decarboxylase, it is an acyl carrier protein to which acetyl and malonyl thioester residues are bound via a 2'-(5''-phosphoribosyl)-3'-dephospho-CoA prosthetic group and turn over during the catalytic mechanism. The polypeptide is Malonate decarboxylase acyl carrier protein (Pseudomonas putida (strain GB-1)).